The following is a 257-amino-acid chain: Cytochrome c oxidase subunit 3 (257 aa).

Helical transmembrane passes span 15-35, 82-102, 124-144, 156-176, 194-214, and 235-255; these read PWPLATGMGAFAMTSGLVKWF, GMILFIISEVFFFVSFFWGFF, FLSALLNTSILLASGVTVTWA, CLQGLLFTVLLGLYFSFLQGL, FFLATGFHGLHVLIGTIFLMI, and AWYWHFVDVVWLFLYLSIYWW.

The protein belongs to the cytochrome c oxidase subunit 3 family. In terms of assembly, component of the cytochrome c oxidase (complex IV, CIV), a multisubunit enzyme composed of a catalytic core of 3 subunits and several supernumerary subunits. The complex exists as a monomer or a dimer and forms supercomplexes (SCs) in the inner mitochondrial membrane with ubiquinol-cytochrome c oxidoreductase (cytochrome b-c1 complex, complex III, CIII).

The protein localises to the mitochondrion inner membrane. It catalyses the reaction 4 Fe(II)-[cytochrome c] + O2 + 8 H(+)(in) = 4 Fe(III)-[cytochrome c] + 2 H2O + 4 H(+)(out). In terms of biological role, component of the cytochrome c oxidase, the last enzyme in the mitochondrial electron transport chain which drives oxidative phosphorylation. The respiratory chain contains 3 multisubunit complexes succinate dehydrogenase (complex II, CII), ubiquinol-cytochrome c oxidoreductase (cytochrome b-c1 complex, complex III, CIII) and cytochrome c oxidase (complex IV, CIV), that cooperate to transfer electrons derived from NADH and succinate to molecular oxygen, creating an electrochemical gradient over the inner membrane that drives transmembrane transport and the ATP synthase. Cytochrome c oxidase is the component of the respiratory chain that catalyzes the reduction of oxygen to water. Electrons originating from reduced cytochrome c in the intermembrane space (IMS) are transferred via the dinuclear copper A center (CU(A)) of subunit 2 and heme A of subunit 1 to the active site in subunit 1, a binuclear center (BNC) formed by heme A3 and copper B (CU(B)). The BNC reduces molecular oxygen to 2 water molecules using 4 electrons from cytochrome c in the IMS and 4 protons from the mitochondrial matrix. This Artemia franciscana (Brine shrimp) protein is Cytochrome c oxidase subunit 3 (COIII).